The primary structure comprises 198 residues: Density-regulated protein (198 aa).

Residues 1 to 11 (MAADISESSGA) show a composition bias toward polar residues. Disordered regions lie at residues 1–20 (MAAD…PRNS) and 72–110 (NSPK…KKKT). At Ala-2 the chain carries N-acetylalanine. A phosphoserine mark is found at Ser-20 and Ser-73. Phosphothreonine is present on Thr-86. Residues 95–110 (KQKRGGRGQIKQKKKT) show a composition bias toward basic residues. The SUI1 domain occupies 115–182 (VTIAKIPRAK…DIIDVIQEKW (68 aa)). Ser-189 is modified (phosphoserine).

This sequence belongs to the DENR family. Interacts with MCTS1 (via PUA domain); the complex regulates translation reinitiation.

The protein localises to the cytoplasm. In terms of biological role, translation regulator forming a complex with MCTS1 to promote translation reinitiation. Translation reinitiation is the process where the small ribosomal subunit remains attached to the mRNA following termination of translation of a regulatory upstream ORF (uORF), and resume scanning on the same mRNA molecule to initiate translation of a downstream ORF, usually the main ORF (mORF). The MCTS1/DENR complex is pivotal to two linked mechanisms essential for translation reinitiation. Firstly, the dissociation of deacylated tRNAs from post-termination 40S ribosomal complexes during ribosome recycling. Secondly, the recruitment in an EIF2-independent manner of aminoacylated initiator tRNA to P site of 40S ribosomes for a new round of translation. This regulatory mechanism governs the translation of more than 150 genes which translation reinitiation is MCTS1/DENR complex-dependent. The sequence is that of Density-regulated protein (DENR) from Pongo abelii (Sumatran orangutan).